A 226-amino-acid polypeptide reads, in one-letter code: Xanthocillin biosynthesis cluster protein F (226 aa).

Its pathway is secondary metabolite biosynthesis. Functionally, part of the gene cluster that mediates the biosynthesis of the isocyanide xanthocillin and its derivatives. The first step of the pathway consists in the conversion of tyrosine into a vinyl-isonitrile intermediate by the isocyanide synthase xanB. Subsequent oxidative dimerization of this intermediate to form xanthocillin may involve the cytochrome P450 monooxygenase xanG, whose expression is coregulated with that of XanB. Xanthocillin can be further modified by the isonitrile hydratase-like protein xanA which introduces N-formyl groups and the methyltransferase xanE which introduces methyl groups, leading to the production of several derivatives including fumiformamide. Finally, fumiformamide can be subject to both oxidative and reductive cyclization to yield melanocins E and F, respectively. This is Xanthocillin biosynthesis cluster protein F from Aspergillus fumigatus (strain ATCC MYA-4609 / CBS 101355 / FGSC A1100 / Af293) (Neosartorya fumigata).